A 374-amino-acid polypeptide reads, in one-letter code: Chaperone protein DnaJ (374 aa).

The J domain occupies 6-71 (DYYAVLEVTR…QKRAAYDRFG (66 aa)). The CR-type zinc-finger motif lies at 130–209 (GVKKPITVPT…CHGAGTVERE (80 aa)). The Zn(2+) site is built by Cys143, Cys146, Cys161, Cys164, Cys183, Cys186, Cys197, and Cys200. CXXCXGXG motif repeat units follow at residues 143–150 (CESCEGTG), 161–168 (CPTCHGAG), 183–190 (CPTCHGAG), and 197–204 (CAACHGAG).

Belongs to the DnaJ family. As to quaternary structure, homodimer. Requires Zn(2+) as cofactor.

It localises to the cytoplasm. In terms of biological role, participates actively in the response to hyperosmotic and heat shock by preventing the aggregation of stress-denatured proteins and by disaggregating proteins, also in an autonomous, DnaK-independent fashion. Unfolded proteins bind initially to DnaJ; upon interaction with the DnaJ-bound protein, DnaK hydrolyzes its bound ATP, resulting in the formation of a stable complex. GrpE releases ADP from DnaK; ATP binding to DnaK triggers the release of the substrate protein, thus completing the reaction cycle. Several rounds of ATP-dependent interactions between DnaJ, DnaK and GrpE are required for fully efficient folding. Also involved, together with DnaK and GrpE, in the DNA replication of plasmids through activation of initiation proteins. This chain is Chaperone protein DnaJ, found in Gluconacetobacter diazotrophicus (strain ATCC 49037 / DSM 5601 / CCUG 37298 / CIP 103539 / LMG 7603 / PAl5).